A 333-amino-acid chain; its full sequence is Ketol-acid reductoisomerase (NADP(+)) (333 aa).

Residues methionine 1–threonine 179 enclose the KARI N-terminal Rossmann domain. Residues tyrosine 22–glutamine 25, lysine 45, serine 48, serine 50, and aspartate 80–glutamine 83 contribute to the NADP(+) site. The active site involves histidine 105. Glycine 131 is an NADP(+) binding site. In terms of domain architecture, KARI C-terminal knotted spans threonine 180 to valine 325. Mg(2+) contacts are provided by aspartate 188, glutamate 192, glutamate 224, and glutamate 228. A substrate-binding site is contributed by serine 249.

The protein belongs to the ketol-acid reductoisomerase family. Mg(2+) is required as a cofactor.

It carries out the reaction (2R)-2,3-dihydroxy-3-methylbutanoate + NADP(+) = (2S)-2-acetolactate + NADPH + H(+). The catalysed reaction is (2R,3R)-2,3-dihydroxy-3-methylpentanoate + NADP(+) = (S)-2-ethyl-2-hydroxy-3-oxobutanoate + NADPH + H(+). The protein operates within amino-acid biosynthesis; L-isoleucine biosynthesis; L-isoleucine from 2-oxobutanoate: step 2/4. It functions in the pathway amino-acid biosynthesis; L-valine biosynthesis; L-valine from pyruvate: step 2/4. In terms of biological role, involved in the biosynthesis of branched-chain amino acids (BCAA). Catalyzes an alkyl-migration followed by a ketol-acid reduction of (S)-2-acetolactate (S2AL) to yield (R)-2,3-dihydroxy-isovalerate. In the isomerase reaction, S2AL is rearranged via a Mg-dependent methyl migration to produce 3-hydroxy-3-methyl-2-ketobutyrate (HMKB). In the reductase reaction, this 2-ketoacid undergoes a metal-dependent reduction by NADPH to yield (R)-2,3-dihydroxy-isovalerate. The sequence is that of Ketol-acid reductoisomerase (NADP(+)) from Mycobacterium ulcerans (strain Agy99).